Consider the following 508-residue polypeptide: Photosystem II CP47 reaction center protein (508 aa).

A run of 6 helical transmembrane segments spans residues 21–36, 101–115, 140–156, 203–218, 237–252, and 457–472; these read SVHI…WAGS, IVFS…IWHW, GIHL…FGAF, IAAG…FHLS, VLSS…AFIV, and TFAL…HGAR.

It belongs to the PsbB/PsbC family. PsbB subfamily. As to quaternary structure, PSII is composed of 1 copy each of membrane proteins PsbA, PsbB, PsbC, PsbD, PsbE, PsbF, PsbH, PsbI, PsbJ, PsbK, PsbL, PsbM, PsbT, PsbX, PsbY, PsbZ, Psb30/Ycf12, at least 3 peripheral proteins of the oxygen-evolving complex and a large number of cofactors. It forms dimeric complexes. Requires Binds multiple chlorophylls. PSII binds additional chlorophylls, carotenoids and specific lipids. as cofactor.

The protein resides in the plastid. The protein localises to the chloroplast thylakoid membrane. Functionally, one of the components of the core complex of photosystem II (PSII). It binds chlorophyll and helps catalyze the primary light-induced photochemical processes of PSII. PSII is a light-driven water:plastoquinone oxidoreductase, using light energy to abstract electrons from H(2)O, generating O(2) and a proton gradient subsequently used for ATP formation. The sequence is that of Photosystem II CP47 reaction center protein from Pinus thunbergii (Japanese black pine).